Consider the following 469-residue polypeptide: Desmin (469 aa).

The segment at 2–107 is head; the sequence is SQAYSSSQRV…QEFLTTRTNE (106 aa). The residue at position 7 (Ser7) is a Phosphoserine; by CDK1. At Ser12 the chain carries Phosphoserine; by AURKB. An Omega-N-methylarginine modification is found at Arg16. Thr17 is modified (phosphothreonine; by AURKB and ROCK1). A phosphoserine; by CDK1 mark is found at Ser28 and Ser32. The residue at position 37 (Arg37) is an Asymmetric dimethylarginine; alternate. Arg37 is modified (omega-N-methylarginine; alternate). Position 45 is a phosphoserine (Ser45). The residue at position 58 (Arg58) is an ADP-ribosylarginine. At Ser60 the chain carries Phosphoserine; by AURKB. Residue Arg70 is modified to Omega-N-methylarginine. Thr76 bears the Phosphothreonine; by ROCK1 mark. Residue Ser81 is modified to Phosphoserine. Residues 107 to 415 enclose the IF rod domain; the sequence is EKVELQELND…KLLEGEESRI (309 aa). Positions 108-140 are coil 1A; it reads KVELQELNDRFANYIEKVRFLEQQNAALAAEVN. Residues 141 to 150 are linker 1; that stretch reads RLKGREPTRV. Positions 151–251 are coil 1B; sequence AEIYEEELRE…HEEEIRELQA (101 aa). Residues 252–267 are linker 12; the sequence is QLQEQQVQVEMDMSKP. The interval 267 to 414 is interaction with NEB; that stretch reads PDLTAALRDI…RKLLEGEESR (148 aa). A coil 2A region spans residues 268–286; the sequence is DLTAALRDIRAQYETIAAK. A linker 2 region spans residues 287 to 294; sequence NISEAEEW. Phosphoserine occurs at positions 289, 357, 360, and 423. The segment at 295 to 411 is coil 2B; it reads YKSKVSDLTQ…ATYRKLLEGE (117 aa). Positions 412–469 are tail; it reads ESRINLPIQTYSALNFRETSPEQRGSEVHTKKTVMIKTIETRDGEVVSEATQQQHEVL. Residues 437 to 452 are interaction with CRYAB; that stretch reads SEVHTKKTVMIKTIET.

The protein belongs to the intermediate filament family. As to quaternary structure, homomer. Interacts with DST. Interacts with MTM1. Interacts with EPPK1; interaction is dependent of higher-order structure of intermediate filament. Interacts with CRYAB. Interacts with NEB (via nebulin repeats 160-164). Interacts (via rod region) with NEBL (via nebulin repeats 1-5). Interacts with ASB2; the interaction targets DES for proteasomal degradation. Interacts with PKP1. Interacts with FLII. In terms of processing, ADP-ribosylation prevents ability to form intermediate filaments. Phosphorylation at Ser-7, Ser-28 and Ser-32 by CDK1, phosphorylation at Ser-60 by AURKB and phosphorylation at Thr-76 by ROCK1 contribute to efficient separation of desmin intermediate filaments during mitosis. Post-translationally, ubiquitination by a SCF-like complex containing ASB2 leads to proteasomal degradation.

The protein localises to the cytoplasm. It localises to the myofibril. It is found in the sarcomere. Its subcellular location is the z line. The protein resides in the cell membrane. The protein localises to the sarcolemma. It localises to the nucleus. It is found in the cell tip. Its subcellular location is the nucleus envelope. Muscle-specific type III intermediate filament essential for proper muscular structure and function. Plays a crucial role in maintaining the structure of sarcomeres, inter-connecting the Z-disks and forming the myofibrils, linking them not only to the sarcolemmal cytoskeleton, but also to the nucleus and mitochondria, thus providing strength for the muscle fiber during activity. In adult striated muscle they form a fibrous network connecting myofibrils to each other and to the plasma membrane from the periphery of the Z-line structures. May act as a sarcomeric microtubule-anchoring protein: specifically associates with detyrosinated tubulin-alpha chains, leading to buckled microtubules and mechanical resistance to contraction. Required for nuclear membrane integrity, via anchoring at the cell tip and nuclear envelope, resulting in maintenance of microtubule-derived intracellular mechanical forces. Contributes to the transcriptional regulation of the NKX2-5 gene in cardiac progenitor cells during a short period of cardiomyogenesis and in cardiac side population stem cells in the adult. Plays a role in maintaining an optimal conformation of nebulette (NEB) on heart muscle sarcomeres to bind and recruit cardiac alpha-actin. In Canis lupus familiaris (Dog), this protein is Desmin (DES).